A 425-amino-acid chain; its full sequence is Histidine--tRNA ligase (425 aa).

It belongs to the class-II aminoacyl-tRNA synthetase family. In terms of assembly, homodimer.

The protein localises to the cytoplasm. The enzyme catalyses tRNA(His) + L-histidine + ATP = L-histidyl-tRNA(His) + AMP + diphosphate + H(+). This is Histidine--tRNA ligase from Desulforapulum autotrophicum (strain ATCC 43914 / DSM 3382 / VKM B-1955 / HRM2) (Desulfobacterium autotrophicum).